The following is a 255-amino-acid chain: Syntaxin-6 (255 aa).

At Ser2 the chain carries N-acetylserine. Position 2 is a phosphoserine (Ser2). The interval 2 to 112 is interaction with BLTP3B; the sequence is SMEDPFFVVK…KDQMSASSVQ (111 aa). Residues 2-168 are required for interaction with VPS51; the sequence is SMEDPFFVVK…QAQQQLIVEQ (167 aa). The Cytoplasmic portion of the chain corresponds to 2–234; it reads SMEDPFFVVK…VSHMTSDRRQ (233 aa). The stretch at 41–74 forms a coiled coil; the sequence is EEIDWTTNELRNNLRSIEWDLEDLDETISIVEAN. Residues Ser129 and Ser152 each carry the phosphoserine modification. Positions 163–225 constitute a t-SNARE coiled-coil homology domain; it reads QLIVEQQDEQ…DNVMKKLAKV (63 aa). A helical; Anchor for type IV membrane protein membrane pass occupies residues 235–255; that stretch reads WCAIAILFAVLLVVLTLFLVL.

The protein belongs to the syntaxin family. Identified in a complex containing STX6, STX12, VAMP4 and VTI1A. Binds EEA1. Interacts with VPS45A and GOPC. Interacts with MARCHF2; the interaction promotes MARCHF2-mediated ubiquitination and degradation of CFTR. Interacts with MARCHF3. Interacts with BLTP3B (via C-terminal coiled-coil domain). Interacts with BAIAP3; this interaction is increased in the presence of calcium. Interacts (via N-terminus) with VPS51. Interacts with VPS13B. In terms of tissue distribution, widely expressed, with relatively higher expression in brain, lung and kidney.

It localises to the golgi apparatus membrane. Its subcellular location is the golgi apparatus. The protein localises to the trans-Golgi network membrane. It is found in the recycling endosome membrane. In terms of biological role, SNARE promoting movement of transport vesicles to target membranes. Targets endosomes to the trans-Golgi network, and may therefore function in retrograde trafficking. Together with SNARE STX12, promotes movement of vesicles from endosomes to the cell membrane, and may therefore function in the endocytic recycling pathway. The polypeptide is Syntaxin-6 (Stx6) (Rattus norvegicus (Rat)).